We begin with the raw amino-acid sequence, 521 residues long: Fucosyltransferase 3 (521 aa).

Positions 1-12 (MKRGKKNSDAGD) are enriched in basic and acidic residues. Residues 1–29 (MKRGKKNSDAGDRLTNSDTRTGSSELNAM) are disordered. Residues 1-39 (MKRGKKNSDAGDRLTNSDTRTGSSELNAMMKPSLSSMKT) are Cytoplasmic-facing. Residues 14–26 (LTNSDTRTGSSEL) are compositionally biased toward polar residues. A helical; Signal-anchor for type II membrane protein membrane pass occupies residues 40-60 (MGLLLAVLMVASVMFSLSVVL). Residues 61–521 (RDPPSDDVIE…QATLFHGCKD (461 aa)) are Lumenal-facing. N-linked (GlcNAc...) asparagine glycans are attached at residues Asn-152, Asn-222, and Asn-493.

Belongs to the glycosyltransferase 37 family. Expressed in roots, stems, leaves, flowers, siliques and seedlings.

Its subcellular location is the golgi apparatus. The protein localises to the golgi stack membrane. The protein operates within protein modification; protein glycosylation. Its function is as follows. May be involved in cell wall biosynthesis. May act as a fucosyltransferase. The chain is Fucosyltransferase 3 (FUT3) from Arabidopsis thaliana (Mouse-ear cress).